The sequence spans 156 residues: Transcription elongation factor GreA (156 aa).

Residues 1-32 (MKKVRLTREGYEKLKKELEDLKRKFMYEISER) are a coiled coil.

The protein belongs to the GreA/GreB family.

In terms of biological role, necessary for efficient RNA polymerase transcription elongation past template-encoded arresting sites. The arresting sites in DNA have the property of trapping a certain fraction of elongating RNA polymerases that pass through, resulting in locked ternary complexes. Cleavage of the nascent transcript by cleavage factors such as GreA or GreB allows the resumption of elongation from the new 3'terminus. GreA releases sequences of 2 to 3 nucleotides. The sequence is that of Transcription elongation factor GreA from Thermotoga maritima (strain ATCC 43589 / DSM 3109 / JCM 10099 / NBRC 100826 / MSB8).